The primary structure comprises 96 residues: UPF0213 protein BCE_0033 (96 aa).

Residues 4–79 (NKHCFYVVEC…KQLNRKQKEE (76 aa)) enclose the GIY-YIG domain.

This sequence belongs to the UPF0213 family.

In Bacillus cereus (strain ATCC 10987 / NRS 248), this protein is UPF0213 protein BCE_0033.